A 350-amino-acid chain; its full sequence is DNA repair protein rhp55 (350 aa).

Residue 51-58 participates in ATP binding; sequence GAPGMGKT. The disordered stretch occupies residues 331–350; sequence QSIPTNSSQRRKRSILECES.

Belongs to the RecA family. RAD55 subfamily.

The protein localises to the nucleus. Required for radiation resistance and meiotic viability and acts in recombination and recombinational DNA repair pathways. In Schizosaccharomyces pombe (strain 972 / ATCC 24843) (Fission yeast), this protein is DNA repair protein rhp55 (rhp55).